Reading from the N-terminus, the 131-residue chain is UPF0102 protein YraN (131 aa).

The segment covering 1 to 19 (MATVPTRSGSPRQLTTKQT) has biased composition (polar residues). The tract at residues 1–20 (MATVPTRSGSPRQLTTKQTG) is disordered.

The protein belongs to the UPF0102 family.

This Escherichia coli O157:H7 protein is UPF0102 protein YraN.